We begin with the raw amino-acid sequence, 639 residues long: ADP-ribosylation factor-binding protein GGA1 (639 aa).

Met1 is subject to N-acetylmethionine. Residues 17–147 (ATNPLNKELD…MLKKQGIVKS (131 aa)) form the VHS domain. The tract at residues 114 to 274 (KILELLYSWT…RLASDTEDND (161 aa)) is interaction with ARF3. The 129-residue stretch at 171–299 (DEEKSKMLAR…VINLYKQLVR (129 aa)) folds into the GAT domain. At Ser185 the chain carries Phosphoserine. The unstructured hinge stretch occupies residues 300–509 (GEEVNGDATA…ITVPLESIKP (210 aa)). Disordered stretches follow at residues 320-421 (LDLS…SGLD) and 434-492 (SLPP…QPVP). Ser355 bears the Phosphoserine; by CK2 mark. The Autoinhibitory motif lies at 358–362 (DDELM). A compositionally biased stretch (polar residues) spans 381–390 (GWNSFQSSDA). Ser418 carries the phosphoserine modification. Positions 462–480 (SSSCSSPSSSATSLLHTVS) are enriched in low complexity. Over residues 481-490 (PEPPRPPQQP) the composition is skewed to pro residues. In terms of domain architecture, GAE spans 510–631 (SNILPVTVYD…NEMGDVDQFP (122 aa)).

This sequence belongs to the GGA protein family. As to quaternary structure, monomer. Interacts with GGA2 and GGA3. Binds to clathrin and activated ARFs, including ARF1, ARF5 and ARF6. Interacts with RABEP1. Interacts with RABGEF1. Interacts with the type-I membrane proteins LRP3, M6PR/CD-MPR and IGF2R/CI-MPR. Interacts (via N-terminal VHS domain) with SORL1/sorLA and SORT1 (via C-terminal cytosolic domain). Interacts with EPN4. Interacts with CCDC91. Interacts with HEATR5B/p200a. Interacts with SYNRG/gamma-synergin. Interacts (via GAE doamin) with NECAP1 and NECAP2. Interacts (via GAE domain) with AFTPH/aftiphilin. Interacts with TSG101 and UBC. Interacts with RNF11. Interacts (via VHS domain) with BACE1 (via DXXLL motif); the interaction highly increases when BACE1 is phosphorylated at 'Ser-498'. Interacts with CNST. Interacts with ADRA2B. Interacts with ARL3; the interaction recruits, in collaboration with RABEP1, PKD1:PKD2 complex to trans-Golgi network and is required for ciliary targeting. Phosphorylated by CK2 and dephosphorylated by PP2A. Phosphorylation of GGA1 allows the internal DXXLL motif to bind the VHS domain and to inhibit the recognition of cargo signals. Post-translationally, ubiquitinated. As to expression, ubiquitously expressed.

The protein resides in the golgi apparatus. Its subcellular location is the trans-Golgi network membrane. It localises to the endosome membrane. The protein localises to the early endosome membrane. Plays a role in protein sorting and trafficking between the trans-Golgi network (TGN) and endosomes. Mediates the ARF-dependent recruitment of clathrin to the TGN and binds ubiquitinated proteins and membrane cargo molecules with a cytosolic acidic cluster-dileucine (DXXLL) motif. Mediates export of the GPCR receptor ADRA2B to the cell surface. Required for targeting PKD1:PKD2 complex from the trans-Golgi network to the cilium membrane. Regulates retrograde transport of proteins such as phosphorylated form of BACE1 from endosomes to the trans-Golgi network. The protein is ADP-ribosylation factor-binding protein GGA1 (GGA1) of Homo sapiens (Human).